The sequence spans 165 residues: Crossover junction endodeoxyribonuclease RuvC (165 aa).

Residues Asp-7, Glu-67, and Asp-140 contribute to the active site. The Mg(2+) site is built by Asp-7, Glu-67, and Asp-140.

Belongs to the RuvC family. Homodimer which binds Holliday junction (HJ) DNA. The HJ becomes 2-fold symmetrical on binding to RuvC with unstacked arms; it has a different conformation from HJ DNA in complex with RuvA. In the full resolvosome a probable DNA-RuvA(4)-RuvB(12)-RuvC(2) complex forms which resolves the HJ. The cofactor is Mg(2+).

It localises to the cytoplasm. It catalyses the reaction Endonucleolytic cleavage at a junction such as a reciprocal single-stranded crossover between two homologous DNA duplexes (Holliday junction).. In terms of biological role, the RuvA-RuvB-RuvC complex processes Holliday junction (HJ) DNA during genetic recombination and DNA repair. Endonuclease that resolves HJ intermediates. Cleaves cruciform DNA by making single-stranded nicks across the HJ at symmetrical positions within the homologous arms, yielding a 5'-phosphate and a 3'-hydroxyl group; requires a central core of homology in the junction. The consensus cleavage sequence is 5'-(A/T)TT(C/G)-3'. Cleavage occurs on the 3'-side of the TT dinucleotide at the point of strand exchange. HJ branch migration catalyzed by RuvA-RuvB allows RuvC to scan DNA until it finds its consensus sequence, where it cleaves and resolves the cruciform DNA. This chain is Crossover junction endodeoxyribonuclease RuvC, found in Halothermothrix orenii (strain H 168 / OCM 544 / DSM 9562).